We begin with the raw amino-acid sequence, 517 residues long: Crotonobetaine/carnitine--CoA ligase (517 aa).

It belongs to the ATP-dependent AMP-binding enzyme family.

It catalyses the reaction 4-(trimethylamino)butanoate + ATP + CoA = 4-(trimethylamino)butanoyl-CoA + AMP + diphosphate. The catalysed reaction is crotonobetaine + ATP + CoA = crotonobetainyl-CoA + AMP + diphosphate. The enzyme catalyses (R)-carnitine + ATP + CoA = (R)-carnitinyl-CoA + AMP + diphosphate. The protein operates within amine and polyamine metabolism; carnitine metabolism. Its function is as follows. Catalyzes the transfer of CoA to carnitine, generating the initial carnitinyl-CoA needed for the CaiB reaction cycle. Also has activity toward crotonobetaine and gamma-butyrobetaine. This chain is Crotonobetaine/carnitine--CoA ligase, found in Salmonella paratyphi A (strain ATCC 9150 / SARB42).